A 399-amino-acid chain; its full sequence is Tryptophan synthase beta chain (399 aa).

Residue Lys90 is modified to N6-(pyridoxal phosphate)lysine.

The protein belongs to the TrpB family. In terms of assembly, tetramer of two alpha and two beta chains. Requires pyridoxal 5'-phosphate as cofactor.

It carries out the reaction (1S,2R)-1-C-(indol-3-yl)glycerol 3-phosphate + L-serine = D-glyceraldehyde 3-phosphate + L-tryptophan + H2O. It participates in amino-acid biosynthesis; L-tryptophan biosynthesis; L-tryptophan from chorismate: step 5/5. In terms of biological role, the beta subunit is responsible for the synthesis of L-tryptophan from indole and L-serine. This chain is Tryptophan synthase beta chain, found in Bacillus pumilus (strain SAFR-032).